Reading from the N-terminus, the 338-residue chain is Glyceraldehyde-3-phosphate dehydrogenase (338 aa).

NAD(+)-binding residues include arginine 13, isoleucine 14, aspartate 35, arginine 80, and serine 123. Residues serine 152, cysteine 153, threonine 154, threonine 183, arginine 198, threonine 212, glycine 213, and arginine 235 each coordinate D-glyceraldehyde 3-phosphate. The active-site Nucleophile is cysteine 153. NAD(+) is bound at residue asparagine 317.

The protein belongs to the glyceraldehyde-3-phosphate dehydrogenase family. Homotetramer.

It localises to the tegument membrane. It catalyses the reaction D-glyceraldehyde 3-phosphate + phosphate + NAD(+) = (2R)-3-phospho-glyceroyl phosphate + NADH + H(+). The protein operates within carbohydrate degradation; glycolysis; pyruvate from D-glyceraldehyde 3-phosphate: step 1/5. In terms of biological role, this antigen is associated with human resistance to schistosomiasis. The protein is Glyceraldehyde-3-phosphate dehydrogenase of Schistosoma mansoni (Blood fluke).